The following is a 578-amino-acid chain: Threonylcarbamoyladenosine tRNA methylthiotransferase (578 aa).

The 109-residue stretch at 63 to 171 folds into the MTTase N-terminal domain; the sequence is QKIWIRTWGC…VVEVVEETIK (109 aa). Residues Cys-72 and Cys-108 each contribute to the [4Fe-4S] cluster site. A Phosphoserine modification is found at Ser-121. [4Fe-4S] cluster contacts are provided by Cys-137, Cys-213, Cys-217, and Cys-220. The Radical SAM core domain maps to 199–430; sequence RKNPLIEIIS…RVFHSYNPYD (232 aa). A TRAM domain is found at 430–492; it reads DHKIGERQQV…KHFLKGQPVS (63 aa). Thr-498 is modified (phosphothreonine). Residues 553 to 570 form a helical membrane-spanning segment; that stretch reads CALKVATGLALLALLLHF.

The protein belongs to the methylthiotransferase family. CDKAL1 subfamily. [4Fe-4S] cluster is required as a cofactor. As to expression, expressed in pancreas, liver and skeletal muscle, especially in white muscle fibers.

The protein localises to the endoplasmic reticulum membrane. It carries out the reaction N(6)-L-threonylcarbamoyladenosine(37) in tRNA + (sulfur carrier)-SH + AH2 + 2 S-adenosyl-L-methionine = 2-methylsulfanyl-N(6)-L-threonylcarbamoyladenosine(37) in tRNA + (sulfur carrier)-H + 5'-deoxyadenosine + L-methionine + A + S-adenosyl-L-homocysteine + 2 H(+). Its function is as follows. Catalyzes the methylthiolation of N6-threonylcarbamoyladenosine (t(6)A), leading to the formation of 2-methylthio-N6-threonylcarbamoyladenosine (ms(2)t(6)A) at position 37 in tRNAs that read codons beginning with adenine. The chain is Threonylcarbamoyladenosine tRNA methylthiotransferase (Cdkal1) from Mus musculus (Mouse).